The following is an 853-amino-acid chain: Eukaryotic translation initiation factor 3 subunit C (853 aa).

Positions 1–78 are disordered; that stretch reads MSRFFAASDS…EDEDQNKVLK (78 aa). The span at 11 to 46 shows a compositional bias: acidic residues; it reads SSEESSEEELYSDNEASAQEDSDKDSDDDDSDDDDS. The PCI domain occupies 599 to 773; it reads FHMHINLELL…SAIIFRKGVE (175 aa). Residues 798 to 853 form a disordered region; that stretch reads TLEQRTQGTANAFERQGGRGGRGGGRGRGGGRGGGVPRGGRNQQFTGGALGRAIQA. Over residues 815–835 the composition is skewed to gly residues; the sequence is GRGGRGGGRGRGGGRGGGVPR.

This sequence belongs to the eIF-3 subunit C family. Component of the eukaryotic translation initiation factor 3 (eIF-3) complex.

Its subcellular location is the cytoplasm. Its function is as follows. Component of the eukaryotic translation initiation factor 3 (eIF-3) complex, which is involved in protein synthesis of a specialized repertoire of mRNAs and, together with other initiation factors, stimulates binding of mRNA and methionyl-tRNAi to the 40S ribosome. The eIF-3 complex specifically targets and initiates translation of a subset of mRNAs involved in cell proliferation. The sequence is that of Eukaryotic translation initiation factor 3 subunit C from Phaeosphaeria nodorum (strain SN15 / ATCC MYA-4574 / FGSC 10173) (Glume blotch fungus).